The primary structure comprises 132 residues: DNA-directed RNA polymerase subunit omega (132 aa).

Belongs to the RNA polymerase subunit omega family. The RNAP catalytic core consists of 2 alpha, 1 beta, 1 beta' and 1 omega subunit. When a sigma factor is associated with the core the holoenzyme is formed, which can initiate transcription.

The enzyme catalyses RNA(n) + a ribonucleoside 5'-triphosphate = RNA(n+1) + diphosphate. In terms of biological role, promotes RNA polymerase assembly. Latches the N- and C-terminal regions of the beta' subunit thereby facilitating its interaction with the beta and alpha subunits. This Ehrlichia ruminantium (strain Welgevonden) protein is DNA-directed RNA polymerase subunit omega.